A 422-amino-acid chain; its full sequence is O-mycaminosyltylonolide 6-deoxyallosyltransferase (422 aa).

This sequence belongs to the glycosyltransferase 28 family.

The enzyme catalyses 5-O-beta-D-mycaminosyltylonolide + dTDP-6-deoxy-alpha-D-allose = demethyllactenocin + dTDP + H(+). Functionally, involved in the biosynthesis of the macrolide antibiotic tylosin derived from the polyketide lactone tylactone. Catalyzes the transfer of 6-deoxy-alpha-D-allose from dTDP-6-deoxy-alpha-D-allose to O-mycaminosyltylonolide (OMT) to yield demethyllactenocin. This Streptomyces fradiae (Streptomyces roseoflavus) protein is O-mycaminosyltylonolide 6-deoxyallosyltransferase.